Consider the following 808-residue polypeptide: Probable inorganic carbon transporter subunit DabA (808 aa).

The Zn(2+) site is built by C335, D337, H497, and C512.

It belongs to the inorganic carbon transporter (TC 9.A.2) DabA family. Forms a complex with DabB. Requires Zn(2+) as cofactor.

The protein localises to the cell inner membrane. Functionally, part of an energy-coupled inorganic carbon pump. This Rhodopseudomonas palustris (strain TIE-1) protein is Probable inorganic carbon transporter subunit DabA.